We begin with the raw amino-acid sequence, 78 residues long: MSRVCQVTGKRPAVGNNRSHALNATRRRFLPNLHTHRFWVESENRFVTLRLTAKGMRIIDKKGIDAVLADIRARGEKI.

Residues 1–20 (MSRVCQVTGKRPAVGNNRSH) form a disordered region.

Belongs to the bacterial ribosomal protein bL28 family.

In Actinobacillus succinogenes (strain ATCC 55618 / DSM 22257 / CCUG 43843 / 130Z), this protein is Large ribosomal subunit protein bL28.